Consider the following 173-residue polypeptide: Putative metal-dependent hydrolase BA_2700/GBAA_2700/BAS2515 (173 aa).

Residues H65, H156, and H160 each contribute to the Zn(2+) site.

This sequence belongs to the metal hydrolase YfiT family. In terms of assembly, homodimer. It depends on Zn(2+) as a cofactor.

Its subcellular location is the cytoplasm. Its function is as follows. Possible metal-dependent hydrolase. The chain is Putative metal-dependent hydrolase BA_2700/GBAA_2700/BAS2515 from Bacillus anthracis.